Here is a 173-residue protein sequence, read N- to C-terminus: Crossover junction endodeoxyribonuclease RuvC (173 aa).

Catalysis depends on residues aspartate 8, glutamate 67, and aspartate 139. Mg(2+) contacts are provided by aspartate 8, glutamate 67, and aspartate 139.

Belongs to the RuvC family. Homodimer which binds Holliday junction (HJ) DNA. The HJ becomes 2-fold symmetrical on binding to RuvC with unstacked arms; it has a different conformation from HJ DNA in complex with RuvA. In the full resolvosome a probable DNA-RuvA(4)-RuvB(12)-RuvC(2) complex forms which resolves the HJ. The cofactor is Mg(2+).

The protein resides in the cytoplasm. The enzyme catalyses Endonucleolytic cleavage at a junction such as a reciprocal single-stranded crossover between two homologous DNA duplexes (Holliday junction).. In terms of biological role, the RuvA-RuvB-RuvC complex processes Holliday junction (HJ) DNA during genetic recombination and DNA repair. Endonuclease that resolves HJ intermediates. Cleaves cruciform DNA by making single-stranded nicks across the HJ at symmetrical positions within the homologous arms, yielding a 5'-phosphate and a 3'-hydroxyl group; requires a central core of homology in the junction. The consensus cleavage sequence is 5'-(A/T)TT(C/G)-3'. Cleavage occurs on the 3'-side of the TT dinucleotide at the point of strand exchange. HJ branch migration catalyzed by RuvA-RuvB allows RuvC to scan DNA until it finds its consensus sequence, where it cleaves and resolves the cruciform DNA. This is Crossover junction endodeoxyribonuclease RuvC from Yersinia enterocolitica serotype O:8 / biotype 1B (strain NCTC 13174 / 8081).